The following is a 455-amino-acid chain: Glutamyl-tRNA reductase (455 aa).

Substrate is bound by residues threonine 49 to arginine 52, serine 109, glutamate 114 to glutamine 116, and glutamine 120. Cysteine 50 acts as the Nucleophile in catalysis. Glycine 189 to glycine 194 serves as a coordination point for NADP(+).

It belongs to the glutamyl-tRNA reductase family. In terms of assembly, homodimer.

The enzyme catalyses (S)-4-amino-5-oxopentanoate + tRNA(Glu) + NADP(+) = L-glutamyl-tRNA(Glu) + NADPH + H(+). It participates in porphyrin-containing compound metabolism; protoporphyrin-IX biosynthesis; 5-aminolevulinate from L-glutamyl-tRNA(Glu): step 1/2. Catalyzes the NADPH-dependent reduction of glutamyl-tRNA(Glu) to glutamate 1-semialdehyde (GSA). This chain is Glutamyl-tRNA reductase, found in Bacillus velezensis (strain DSM 23117 / BGSC 10A6 / LMG 26770 / FZB42) (Bacillus amyloliquefaciens subsp. plantarum).